The following is a 123-amino-acid chain: MIQMQSMLDAADNSGARSVMCIKVLGGSHRRYAHIGDVIKVTVKEAIPRGKVKKGDVMKAVVVRTRKGVRRPDGSVIRFDRNACVLLNNTTEQPIGTRIFGPVTRELRGDKFMKIVSLAPEVL.

This sequence belongs to the universal ribosomal protein uL14 family. In terms of assembly, part of the 50S ribosomal subunit. Forms a cluster with proteins L3 and L19. In the 70S ribosome, L14 and L19 interact and together make contacts with the 16S rRNA in bridges B5 and B8.

In terms of biological role, binds to 23S rRNA. Forms part of two intersubunit bridges in the 70S ribosome. This is Large ribosomal subunit protein uL14 from Vibrio parahaemolyticus serotype O3:K6 (strain RIMD 2210633).